The primary structure comprises 364 residues: Lysophosphatidic acid receptor 1 (364 aa).

The Extracellular segment spans residues 1–50 (MAAASTSSPVISQPQFTAMNEQQCFYNESIAFFYNRSGKYLATEWNTVSK). 2 cysteine pairs are disulfide-bonded: C24–C190 and C188–C195. N-linked (GlcNAc...) asparagine glycosylation is found at N27 and N35. Residue K39 participates in a 1-acyl-sn-glycero-3-phosphate binding. Residues 51-75 (LVMGLGITVCVFIMLANLLVMVAIY) traverse the membrane as a helical segment. Topologically, residues 76 to 83 (VNRRFHFP) are cytoplasmic. A helical transmembrane segment spans residues 84 to 107 (IYYLMANLAAADFFAGLAYFYLMF). The Extracellular segment spans residues 108–121 (NTGPNTRRLTVSTW). Residues 122 to 144 (LLRQGLIDTSLTASVANLLAIAI) traverse the membrane as a helical segment. 124–129 (RQGLID) is a binding site for a 1-acyl-sn-glycero-3-phosphate. The Cytoplasmic segment spans residues 145–163 (ERHITVFRMQLHTRMSNRR). The chain crosses the membrane as a helical span at residues 164-184 (VVVVIVVIWTMAIVMGAIPSV). At 185–204 (GWNCICDIDHCSNMAPLYSD) the chain is on the extracellular side. Residues 205-225 (SYLVFWAIFNLVTFVVMVVLY) traverse the membrane as a helical segment. Position 210 (W210) interacts with a 1-acyl-sn-glycero-3-phosphate. Over 226–255 (AHIFGYVRQRTMRMSRHSSGPRRNRDTMMS) the chain is Cytoplasmic. Residues 256–280 (LLKTVVIVLGAFIVCWTPGLVLLLL) form a helical membrane-spanning segment. The Extracellular portion of the chain corresponds to 281–294 (DVCCPQCDVLAYEK). Residues C284 and C287 are joined by a disulfide bond. Residues 295–315 (FFLLLAEFNSAMNPIIYSYRD) form a helical membrane-spanning segment. Over 316–364 (KEMSATFRQILCCQRNENPNGPTEGSDRSASSLNHTILAGVHSNDHSVV) the chain is Cytoplasmic. Residue S341 is modified to Phosphoserine. T351 carries the post-translational modification Phosphothreonine.

This sequence belongs to the G-protein coupled receptor 1 family. In terms of assembly, interacts with RALA and GRK2. Interacts with GNAQ and GNA13. Interacts with CD14; the interaction is enhanced by exposure to bacterial lipopolysaccharide (LPS). In terms of processing, N-glycosylated. In terms of tissue distribution, detected in lung. Detected in oligodendrocytes in corpus callosum in brain cortex (at protein level). Expressed within the embryonic cerebral cortex, where it is enriched in the ventricular zone. In the adult brain, also expressed in oligodendrocytes, as well as Schwann cells of the peripheral nervous system. Expressed in many other tissues, including lung, heart, intestine, spleen, thymus, and stomach. No expression in liver. Detected in kidney and testis. Detected in embryonic fibroblasts. Detected in adult lung fibroblasts and lung endothelial cells. Detected in dorsal root ganglion and dorsal root. Detected in astrocytes. Detected in bone.

It is found in the cell surface. It localises to the cell membrane. Its subcellular location is the endosome. Its function is as follows. Receptor for lysophosphatidic acid (LPA). Plays a role in the reorganization of the actin cytoskeleton, cell migration, differentiation and proliferation, and thereby contributes to the responses to tissue damage and infectious agents. Activates downstream signaling cascades via the G(i)/G(o), G(12)/G(13), and G(q) families of heteromeric G proteins. Signaling inhibits adenylyl cyclase activity and decreases cellular cAMP levels. Signaling triggers an increase of cytoplasmic Ca(2+) levels. Activates RALA; this leads to the activation of phospholipase C (PLC) and the formation of inositol 1,4,5-trisphosphate. Signaling mediates activation of down-stream MAP kinases. Contributes to the regulation of cell shape. Promotes Rho-dependent reorganization of the actin cytoskeleton in neuronal cells and neurite retraction. Promotes the activation of Rho and the formation of actin stress fibers. Promotes formation of lamellipodia at the leading edge of migrating cells via activation of RAC1. Through its function as LPA receptor, plays a role in chemotaxis and cell migration, including responses to injury and wounding. Plays a role in triggering inflammation in response to bacterial lipopolysaccharide (LPS) via its interaction with CD14. Promotes cell proliferation in response to LPA. Inhibits the intracellular ciliogenesis pathway in response to LPA and through AKT1 activation. Required for normal skeleton development. May play a role in osteoblast differentiation. Required for normal brain development. Required for normal proliferation, survival and maturation of newly formed neurons in the adult dentate gyrus. Plays a role in pain perception and in the initiation of neuropathic pain. The polypeptide is Lysophosphatidic acid receptor 1 (Lpar1) (Mus musculus (Mouse)).